The sequence spans 202 residues: Holliday junction branch migration complex subunit RuvA (202 aa).

Positions 1 to 62 are domain I; the sequence is MYEYLHGLIT…DTAQTLYGFS (62 aa). The domain II stretch occupies residues 63 to 141; sequence DFAEKQLFLK…DLAPATDDNT (79 aa). The tract at residues 142 to 151 is flexible linker; sequence LFTPEVAPTT. The tract at residues 152 to 202 is domain III; the sequence is TENPQLADALAALTALGYRETAVKKITAQLRQFNGQTTNDYLSEGLRLLTK.

The protein belongs to the RuvA family. In terms of assembly, homotetramer. Forms an RuvA(8)-RuvB(12)-Holliday junction (HJ) complex. HJ DNA is sandwiched between 2 RuvA tetramers; dsDNA enters through RuvA and exits via RuvB. An RuvB hexamer assembles on each DNA strand where it exits the tetramer. Each RuvB hexamer is contacted by two RuvA subunits (via domain III) on 2 adjacent RuvB subunits; this complex drives branch migration. In the full resolvosome a probable DNA-RuvA(4)-RuvB(12)-RuvC(2) complex forms which resolves the HJ.

The protein localises to the cytoplasm. Functionally, the RuvA-RuvB-RuvC complex processes Holliday junction (HJ) DNA during genetic recombination and DNA repair, while the RuvA-RuvB complex plays an important role in the rescue of blocked DNA replication forks via replication fork reversal (RFR). RuvA specifically binds to HJ cruciform DNA, conferring on it an open structure. The RuvB hexamer acts as an ATP-dependent pump, pulling dsDNA into and through the RuvAB complex. HJ branch migration allows RuvC to scan DNA until it finds its consensus sequence, where it cleaves and resolves the cruciform DNA. This Levilactobacillus brevis (strain ATCC 367 / BCRC 12310 / CIP 105137 / JCM 1170 / LMG 11437 / NCIMB 947 / NCTC 947) (Lactobacillus brevis) protein is Holliday junction branch migration complex subunit RuvA.